The chain runs to 800 residues: MLISNEWLKEYVTIDDSVSNLAERITRTGIEVDDLIDYTKDIKNLVVGFVKSKEKHPDADKLNVCQVDIGEDEPVQIVCGAPNVDAGQYVIVAKVGGRLPGGIKIKRAKLRGERSEGMICSLQEIGISSNYIPKSFESGIYVFSEAQVPGTDALQALYLDDQVMEFDLTPNRADALSMIGTAYEVAALYNTKMTKPETTSNELDLSANDELTVTIENEDKVPYYSARVVHDVTIEPSPIWMQARLIKAGIRPINNVVDISNYVLLEYGQPLHMFDQDAIGSQQIVVRQANEGEKMTTLDDTERELLTSDIVITNGQTPIALAGVMGGDFSEVKEQTSNIVIEGAIFDPVSIRHTSRRLNLRSESSSRFEKGIATEFVDEAVDRACYLLQTYANGKVLKDRVSSGELGAFITPIDITADKINRTIGFDLSQNDIVTIFNQLGFDTEINDDVITVLVPSRRKDITIKEDLIEEVARIYGYDDIPSTLPVFDKVTSGQLTDRQYKTRMVKEVLEGAGLDQAITYSLVSKEDATAFSMQQRQTIDLLMPMSEAHASLRQSLLPHLIEAASYNVARKNKDVKLFEIGNVFFANGEGELPDQVEYLSGILTGDYVVNQWQDKKETVDFYLAKGVVDRVSEKLNLEFSYRRADIDGLHPGRTAEILLENKVVGFIGELHPILAADNDLKRTYVFELNFDALMAVSVGYINYQPIPRFPGMSRDIALEVDQNIPAADLLSTIHAHGGNILKDTLVFDVYQGEHLEKGKKSIAIRLNYLDTEETLTDERVSKVQAEIEAALIEQGAVIR.

In terms of domain architecture, tRNA-binding spans 39–154; it reads TKDIKNLVVG…EAQVPGTDAL (116 aa). The 76-residue stretch at 408 to 483 folds into the B5 domain; sequence AFITPIDITA…RIYGYDDIPS (76 aa). Residues Asp-461, Asp-467, Glu-470, and Glu-471 each coordinate Mg(2+). Residues 708 to 800 form the FDX-ACB domain; that stretch reads PRFPGMSRDI…ALIEQGAVIR (93 aa).

The protein belongs to the phenylalanyl-tRNA synthetase beta subunit family. Type 1 subfamily. As to quaternary structure, tetramer of two alpha and two beta subunits. Requires Mg(2+) as cofactor.

Its subcellular location is the cytoplasm. It catalyses the reaction tRNA(Phe) + L-phenylalanine + ATP = L-phenylalanyl-tRNA(Phe) + AMP + diphosphate + H(+). This is Phenylalanine--tRNA ligase beta subunit from Staphylococcus aureus (strain USA300).